Reading from the N-terminus, the 280-residue chain is uncharacterized protein (280 aa).

This is an uncharacterized protein from Aedes vexans (Inland floodwater mosquito).